Here is an 813-residue protein sequence, read N- to C-terminus: Leucine--tRNA ligase (813 aa).

The short motif at 42–52 (PYTSGNLHIGH) is the 'HIGH' region element. The 'KMSKS' region motif lies at 580–584 (KMSKS). Lysine 583 is an ATP binding site.

This sequence belongs to the class-I aminoacyl-tRNA synthetase family.

The protein localises to the cytoplasm. The enzyme catalyses tRNA(Leu) + L-leucine + ATP = L-leucyl-tRNA(Leu) + AMP + diphosphate. This Dehalococcoides mccartyi (strain ATCC BAA-2266 / KCTC 15142 / 195) (Dehalococcoides ethenogenes (strain 195)) protein is Leucine--tRNA ligase.